A 95-amino-acid polypeptide reads, in one-letter code: Scorpine-like peptide Smp76 (95 aa).

The first 19 residues, 1–19 (MNCKLTALLFLGLIVIASC), serve as a signal peptide directing secretion. Residues 55 to 95 (EFQCVANVDTLGNCKKHCAKTTGEKGYCHGTKCKCGIELSY) enclose the BetaSPN-type CS-alpha/beta domain. 3 cysteine pairs are disulfide-bonded: Cys58/Cys82, Cys68/Cys87, and Cys72/Cys89.

Post-translationally, disulfide bonds are critical for antiviral function, and their disruption inhibit viral activity. As to expression, expressed by the venom gland.

It localises to the secreted. Its function is as follows. Antibacterial peptide. Dose-dependently inhibits Dengue virus (DENV), Zika virus (ZIKV) and Hepatitis C virus (HCV) infections. Two mechanisms of action have been described by two different groups: one involving activity on extracellular particles, and the other regulating the immune system. On Dengue virus (DENV), Zika virus (ZIKV), suppress the established viral infection, similar to the effect of interferon (IFN)-beta. Mechanistically, upregulates the expression of IFN-beta by activating interferon regulatory transcription factor 3 (IRF3) phosphorylation. On HCV and DENV, acts by inactivating extra-cellular infectious particles without affecting viral replication. Shows very weak inhibition on measles virus. Is neither toxic nor hemolytic in vitro at high concentrations. This chain is Scorpine-like peptide Smp76, found in Scorpio palmatus (Israeli golden scorpion).